The sequence spans 306 residues: uncharacterized protein (306 aa).

Positions 13-39 (NMLNEIAANNNLLNNKNNQTNQLNNNQ) form a coiled coil. Disordered regions lie at residues 44-76 (YNNQNNNQNYPQNYPQNSQQNFQQNSQQNHQQN), 103-204 (DSKE…QSGQ), and 216-249 (QKQLDKNQPEKIPSKPEKNQKQSHKPKLPPTMQH). A compositionally biased stretch (low complexity) spans 119–201 (HQQPIQNNPS…QFAQPNQYNQ (83 aa)). The segment covering 218–235 (QLDKNQPEKIPSKPEKNQ) has biased composition (basic and acidic residues). A helical membrane pass occupies residues 279–299 (LFDYIIIPIALVLVFLFLVHP).

Its subcellular location is the membrane. This is an uncharacterized protein from Acanthamoeba polyphaga mimivirus (APMV).